The sequence spans 360 residues: 3-dehydroquinate synthase (360 aa).

NAD(+) contacts are provided by residues 71–76, 105–109, 129–130, Lys142, Lys151, and 169–172; these read DGEQFK, GVIGD, TT, and FLKT. Residues Glu184, His247, and His264 each contribute to the Zn(2+) site.

This sequence belongs to the sugar phosphate cyclases superfamily. Dehydroquinate synthase family. The cofactor is NAD(+). Requires Co(2+) as cofactor. Zn(2+) serves as cofactor.

It localises to the cytoplasm. It catalyses the reaction 7-phospho-2-dehydro-3-deoxy-D-arabino-heptonate = 3-dehydroquinate + phosphate. It functions in the pathway metabolic intermediate biosynthesis; chorismate biosynthesis; chorismate from D-erythrose 4-phosphate and phosphoenolpyruvate: step 2/7. Catalyzes the conversion of 3-deoxy-D-arabino-heptulosonate 7-phosphate (DAHP) to dehydroquinate (DHQ). The chain is 3-dehydroquinate synthase from Buchnera aphidicola subsp. Schizaphis graminum (strain Sg).